The primary structure comprises 876 residues: Alanine--tRNA ligase (876 aa).

Residue lysine 74 is modified to N6-acetyllysine. Zn(2+) is bound by residues histidine 564, histidine 568, cysteine 666, and histidine 670.

It belongs to the class-II aminoacyl-tRNA synthetase family. Homotetramer. Zn(2+) serves as cofactor.

The protein resides in the cytoplasm. It catalyses the reaction tRNA(Ala) + L-alanine + ATP = L-alanyl-tRNA(Ala) + AMP + diphosphate. Functionally, catalyzes the attachment of alanine to tRNA(Ala) in a two-step reaction: alanine is first activated by ATP to form Ala-AMP and then transferred to the acceptor end of tRNA(Ala). Also edits incorrectly charged Ser-tRNA(Ala) and Gly-tRNA(Ala) via its editing domain. The sequence is that of Alanine--tRNA ligase from Escherichia coli O6:K15:H31 (strain 536 / UPEC).